The primary structure comprises 404 residues: 11-beta-hydroxysteroid dehydrogenase type 2 (404 aa).

82-111 (TRAVLITGCDSGFGNATAKKLDTMGFTVLA) serves as a coordination point for NAD(+). Position 219 (serine 219) interacts with substrate. The active-site Proton acceptor is the tyrosine 232. Residues 383 to 404 (LTSARDIAQDQGPRPDPSPTAQ) are disordered.

It belongs to the short-chain dehydrogenases/reductases (SDR) family. As to quaternary structure, interacts with ligand-free cytoplasmic NR3C2. In terms of tissue distribution, highly expressed in kidney, adrenal and colon; detected at lower levels on lung, liver, and spleen. Expressed in oocytes. Expressed in uterine tissues and in corpora lutea.

Its subcellular location is the microsome. It is found in the endoplasmic reticulum. It carries out the reaction an 11beta-hydroxysteroid + NAD(+) = an 11-oxosteroid + NADH + H(+). The catalysed reaction is corticosterone + NAD(+) = 11-dehydrocorticosterone + NADH + H(+). It catalyses the reaction cortisol + NAD(+) = cortisone + NADH + H(+). The enzyme catalyses 11beta,17beta-dihydroxyandrost-4-ene-3-one + NAD(+) = 17beta-hydroxyandrost-4-ene-3,11-dione + NADH + H(+). It carries out the reaction 11beta-hydroxyandrost-4-ene-3,17-dione + NAD(+) = androst-4-ene-3,11,17-trione + NADH + H(+). It participates in steroid metabolism. Its activity is regulated as follows. Inhibited by glycyrrhetinic acid, carbenoloxone, 11-alpha-OH-progesterone and 11-beta-OH-progesterone. Functionally, catalyzes the conversion of biologically active 11beta-hydroxyglucocorticoids (11beta-hydroxysteroid) such as cortisol, to inactive 11-ketoglucocorticoids (11-oxosteroid) such as cortisone, in the presence of NAD(+). Functions as a dehydrogenase (oxidase), thereby decreasing the concentration of active glucocorticoids, thus protecting the nonselective mineralocorticoid receptor from occupation by glucocorticoids. Affinity towards corticosterone is higher than cortisol or dexamethasone. Plays an important role in maintaining glucocorticoids balance during preimplantation and protects the fetus from excessive maternal corticosterone exposure. Catalyzes the oxidation of 11beta-hydroxytestosterone (11beta,17beta-dihydroxyandrost-4-ene-3-one) to 11-ketotestosterone (17beta-hydroxyandrost-4-ene-3,11-dione), a major bioactive androgen. Catalyzes the conversion of 11beta-hydroxyandrostenedione (11beta-hydroxyandrost-4-ene-3,17-dione) to 11-ketoandrostenedione (androst-4-ene-3,11,17-trione), which can be further metabolized to 11-ketotestosterone. Converts 7-beta-25-dihydroxycholesterol to 7-oxo-25-hydroxycholesterol in vitro. 7-beta-25-dihydroxycholesterol (not 7-oxo-25-hydroxycholesterol) acts as ligand for the G-protein-coupled receptor (GPCR) Epstein-Barr virus-induced gene 2 (EBI2) and may thereby regulate immune cell migration. May protect ovulating oocytes and fertilizing spermatozoa from the adverse effects of cortisol. This chain is 11-beta-hydroxysteroid dehydrogenase type 2 (HSD11B2), found in Bos taurus (Bovine).